Here is a 346-residue protein sequence, read N- to C-terminus: B3 domain-containing protein At3g25182 (346 aa).

Residues 168–187 are disordered; sequence KRRAVEQRKRTGGVKKAKVA. The segment at residues 237-338 is a DNA-binding region (TF-B3); that stretch reads FNNLLRNDFL…ILCFAMEQRS (102 aa).

The protein localises to the nucleus. This chain is B3 domain-containing protein At3g25182, found in Arabidopsis thaliana (Mouse-ear cress).